We begin with the raw amino-acid sequence, 395 residues long: G-protein coupled receptor 182 (395 aa).

Residues 1–53 (MSVIPSPRPVSTLEPDNDFRDIHNWTELLHLFNQTFTDCHIEFNENTKHVVLF) lie on the Extracellular side of the membrane. N24 and N33 each carry an N-linked (GlcNAc...) asparagine glycan. Residues 54 to 75 (VFYLAIFVVGLVENVLVICVNC) traverse the membrane as a helical segment. Over 76–86 (RRSGRVGMLNL) the chain is Cytoplasmic. The helical transmembrane segment at 87-109 (YILNMAIADLGIILSLPVWMLEV) threads the bilayer. The Extracellular portion of the chain corresponds to 110-123 (MLEYTWLWGSFSCR). C122 and C198 are oxidised to a cystine. The chain crosses the membrane as a helical span at residues 124–145 (FIHYFYLVNMYSSIFFLTCLSI). The Cytoplasmic segment spans residues 146–166 (DRYVTLTNTSPSWQRHQHRIR). A helical membrane pass occupies residues 167–189 (RAVCAGVWVLSAIIPLPEVVHIQ). Over 190–213 (LLDGSEPMCLFLAPFETYSAWALA) the chain is Extracellular. Residues 214–235 (VALSATILGFLLPFLLIAVFNI) form a helical membrane-spanning segment. Over 236–254 (LTACRLRRQRQTESRRHCL) the chain is Cytoplasmic. Residues 255-276 (LMWAYIVVFAICWLPYQVTMLL) traverse the membrane as a helical segment. Residues 277 to 295 (LTLHGTHIFLHCHLVNLLY) lie on the Extracellular side of the membrane. The helical transmembrane segment at 296–316 (FFYEIIDCFSMLHCVANPILY) threads the bilayer. Residues 317-395 (NFLSPSFRGR…QTPHLHSAIL (79 aa)) are Cytoplasmic-facing. S329 carries the phosphoserine modification.

This sequence belongs to the G-protein coupled receptor 1 family. As to expression, expressed in liver and lung.

It is found in the cell membrane. In terms of biological role, orphan receptor. The sequence is that of G-protein coupled receptor 182 (Gpr182) from Mus musculus (Mouse).